Here is a 284-residue protein sequence, read N- to C-terminus: 2-dehydro-3-deoxyphosphooctonate aldolase (284 aa).

Belongs to the KdsA family.

Its subcellular location is the cytoplasm. The enzyme catalyses D-arabinose 5-phosphate + phosphoenolpyruvate + H2O = 3-deoxy-alpha-D-manno-2-octulosonate-8-phosphate + phosphate. It functions in the pathway carbohydrate biosynthesis; 3-deoxy-D-manno-octulosonate biosynthesis; 3-deoxy-D-manno-octulosonate from D-ribulose 5-phosphate: step 2/3. Its pathway is bacterial outer membrane biogenesis; lipopolysaccharide biosynthesis. In Edwardsiella ictaluri (strain 93-146), this protein is 2-dehydro-3-deoxyphosphooctonate aldolase.